We begin with the raw amino-acid sequence, 246 residues long: Proteasome subunit alpha type-5 (246 aa).

It belongs to the peptidase T1A family. In terms of assembly, the 26S proteasome consists of a 20S proteasome core and two 19S regulatory subunits. The 20S proteasome core is composed of 28 subunits that are arranged in four stacked rings, resulting in a barrel-shaped structure. The two end rings are each formed by seven alpha subunits, and the two central rings are each formed by seven beta subunits. The catalytic chamber with the active sites is on the inside of the barrel.

It is found in the cytoplasm. The protein localises to the nucleus. In terms of biological role, the proteasome is a multicatalytic proteinase complex which is characterized by its ability to cleave peptides with Arg, Phe, Tyr, Leu, and Glu adjacent to the leaving group at neutral or slightly basic pH. The proteasome has an ATP-dependent proteolytic activity. This Trypanosoma brucei brucei protein is Proteasome subunit alpha type-5.